Reading from the N-terminus, the 245-residue chain is MIIPALDLIDGTVVRLHQGDYGQQRDYGRDPLPRLQDYEAQGAQLLHLVDLTGAKDPAKRQIALIQKLVAGVNVPVQVGGGVRSEDDVAALLDAGVARVVVGSTAVKAPQDVQRWFQRFGADALVLALDVRIDDAGNKQVAVSGWQENSGVTLETLVESYLPAGLKHVLCTDISRDGTLSGSNVALYEEVCARYPQVAFQSSGGIGELSDIRALRGSGVGGVIVGRALLEGKFNVTEAIQCWQNG.

The active-site Proton acceptor is the D7. D129 serves as the catalytic Proton donor.

This sequence belongs to the HisA/HisF family.

It localises to the cytoplasm. The catalysed reaction is 1-(5-phospho-beta-D-ribosyl)-5-[(5-phospho-beta-D-ribosylamino)methylideneamino]imidazole-4-carboxamide = 5-[(5-phospho-1-deoxy-D-ribulos-1-ylimino)methylamino]-1-(5-phospho-beta-D-ribosyl)imidazole-4-carboxamide. It participates in amino-acid biosynthesis; L-histidine biosynthesis; L-histidine from 5-phospho-alpha-D-ribose 1-diphosphate: step 4/9. This is 1-(5-phosphoribosyl)-5-[(5-phosphoribosylamino)methylideneamino] imidazole-4-carboxamide isomerase from Cronobacter sakazakii (strain ATCC BAA-894) (Enterobacter sakazakii).